A 350-amino-acid polypeptide reads, in one-letter code: uncharacterized protein (350 aa).

Positions 214, 225, 289, 318, and 332 each coordinate Mn(2+).

The protein belongs to the peptidase M24B family. It depends on Mn(2+) as a cofactor.

This is an uncharacterized protein from Staphylococcus saprophyticus subsp. saprophyticus (strain ATCC 15305 / DSM 20229 / NCIMB 8711 / NCTC 7292 / S-41).